We begin with the raw amino-acid sequence, 256 residues long: SPX domain-containing protein 1 (256 aa).

The region spanning 1–155 (MKFGKSLSNQ…GDLMRLPFIQ (155 aa)) is the SPX domain. The short motif at 30-46 (KRLKLIGSKTADRPVKR) is the Bipartite nuclear localization signal element.

In terms of assembly, interacts with PHR1 in a highly Pi-dependent manner.

It is found in the nucleus. Functionally, plays a positive role in plant adaptation to phosphate starvation. Inhibits PHR1 DNA-binding activity in a Pi-dependent manner. This chain is SPX domain-containing protein 1, found in Arabidopsis thaliana (Mouse-ear cress).